The chain runs to 228 residues: MACLGRPGCRGWAGASLVLVVVLALAACTESVAGRAMRATDRSSGLPTSAKPARARDLLLQDGDRAPFGQVTQSRVGDSYFTSAVPPECSAALLFKGSPLRPDGSSDHAEAAYNVTGPLPYAESVDVYTNVLNVHDVVWNGFRDVSHCRGDAVGVSRAGRSTPMRLRYFATLSDGVLVWTMSNPRWTCDYGLAVVPHAVLVLSACGFKPGFPMAEWASKRRAQLDSQV.

The first 27 residues, 1 to 27, serve as a signal peptide directing secretion; that stretch reads MACLGRPGCRGWAGASLVLVVVLALAA. Cysteine 28 is lipidated: N-palmitoyl cysteine. Cysteine 28 carries S-diacylglycerol cysteine lipidation. A helical transmembrane segment spans residues 191 to 211; it reads GLAVVPHAVLVLSACGFKPGF.

Its subcellular location is the cell membrane. This is Putative lipoprotein LprH (lprH) from Mycobacterium bovis (strain ATCC BAA-935 / AF2122/97).